A 501-amino-acid chain; its full sequence is MAKVLVNGNIKSGDVLKEVIENEPHLENSNIAIIRGIKKETEKESKKYKITTTKGVMIVGITENNESVDFWNKNYSLLEGKNLRWKSPLDVAFGAITIDLDVVKEPYKFKKYDVALSISGFDKTEGHLIFIKKDATEAQGLRNPKIGELIGGKRILPKLTTEDKIISIEPIMESREKIDYLLTTDLNTKLEDDWKIFTYCEAELEGPSKAVEHVLAIMESGYIEASEHTNTYIADCRLQTLKMDEENLKDRDRGTITVRNIGEGIGKVFVYKENRTSSLSHTAVGKITKGMELLDFSEGGIITTISTPERLTVIGKTNEEAKKLFEKYGINHTMEGAPNDIIIEQTPKYTMDILKSKEVITKGIPENKIIKIEIYDEKAPVSAWYFRKMTGLTTQKVGSLPINFKHGDMVMFDKNEEYAKGLLPENIPNEETGCPEGVIAITNMAKRYKGYIGIRLSSNDKFGPTGESFEGTNIVGKVVENGEIIKKLRAKDRVYFLEVNQ.

Belongs to the UPF0288 family.

This is UPF0288 protein Maeo_0995 from Methanococcus aeolicus (strain ATCC BAA-1280 / DSM 17508 / OCM 812 / Nankai-3).